Here is a 321-residue protein sequence, read N- to C-terminus: Basic peroxidase (321 aa).

An N-terminal signal peptide occupies residues 1–30; the sequence is MSYHKSSGTILMVPLFMLLISVNYFMSCNA. Pyrrolidone carboxylic acid is present on Gln31. Disulfide bonds link Cys41–Cys117, Cys74–Cys79, Cys123–Cys317, and Cys202–Cys228. The active-site Proton acceptor is His72. Ca(2+) is bound by residues Asp73, Val76, Gly78, Asp80, and Ser82. Pro165 contacts substrate. A heme b-binding site is contributed by His195. A Ca(2+)-binding site is contributed by Thr196. Asn211 and Asn221 each carry an N-linked (GlcNAc...) asparagine glycan. 3 residues coordinate Ca(2+): Asp241, Thr244, and Asp249.

This sequence belongs to the peroxidase family. Classical plant (class III) peroxidase subfamily. Heme b is required as a cofactor. The cofactor is Ca(2+). In terms of processing, N-glycosylated. In terms of tissue distribution, expressed in tracheary elements, roots, young and old hypocotyls, and stems in the partially glycosylated form and in roots and young hypocotyls in the fully glycosylated form. None of the isoforms is significantly expressed in leaves or cotyledons.

It is found in the secreted. The enzyme catalyses 2 a phenolic donor + H2O2 = 2 a phenolic radical donor + 2 H2O. Removal of H(2)O(2), oxidation of toxic reductants, biosynthesis and degradation of lignin, suberization, auxin catabolism, response to environmental stresses such as wounding, pathogen attack and oxidative stress. These functions might be dependent on each isozyme/isoform in each plant tissue. Involved in the synthesis of highly polymerized lignins. This is Basic peroxidase (POD1) from Zinnia elegans (Garden zinnia).